The following is a 282-amino-acid chain: Large ribosomal subunit protein uL2 (282 aa).

Residues 215–282 form a disordered region; it reads RHKGIRPTVR…IIRSRKETKK (68 aa). The span at 263-282 shows a compositional bias: basic residues; sequence RNPKKPSTKLIIRSRKETKK.

It belongs to the universal ribosomal protein uL2 family. In terms of assembly, part of the 50S ribosomal subunit. Forms a bridge to the 30S subunit in the 70S ribosome.

In terms of biological role, one of the primary rRNA binding proteins. Required for association of the 30S and 50S subunits to form the 70S ribosome, for tRNA binding and peptide bond formation. It has been suggested to have peptidyltransferase activity; this is somewhat controversial. Makes several contacts with the 16S rRNA in the 70S ribosome. This Mesomycoplasma hyopneumoniae (strain J / ATCC 25934 / NCTC 10110) (Mycoplasma hyopneumoniae) protein is Large ribosomal subunit protein uL2.